The following is a 442-amino-acid chain: Histidine--tRNA ligase (442 aa).

A disordered region spans residues 416–442 (SGDETTVPVEEFPPEGGEELPTYEDYE). Over residues 427 to 442 (FPPEGGEELPTYEDYE) the composition is skewed to acidic residues.

Belongs to the class-II aminoacyl-tRNA synthetase family.

Its subcellular location is the cytoplasm. It catalyses the reaction tRNA(His) + L-histidine + ATP = L-histidyl-tRNA(His) + AMP + diphosphate + H(+). The chain is Histidine--tRNA ligase from Halorubrum lacusprofundi (strain ATCC 49239 / DSM 5036 / JCM 8891 / ACAM 34).